Here is a 168-residue protein sequence, read N- to C-terminus: Phosphopantetheine adenylyltransferase (168 aa).

Position 8 (Ser-8) interacts with substrate. Residues 8–9 (SF) and His-16 contribute to the ATP site. Substrate is bound by residues Lys-40, Ala-72, and Arg-86. Residues 87–89 (GLR), Glu-97, and 122–128 (YSFLSSS) contribute to the ATP site.

This sequence belongs to the bacterial CoaD family. As to quaternary structure, homohexamer. Requires Mg(2+) as cofactor.

Its subcellular location is the cytoplasm. It carries out the reaction (R)-4'-phosphopantetheine + ATP + H(+) = 3'-dephospho-CoA + diphosphate. Its pathway is cofactor biosynthesis; coenzyme A biosynthesis; CoA from (R)-pantothenate: step 4/5. Reversibly transfers an adenylyl group from ATP to 4'-phosphopantetheine, yielding dephospho-CoA (dPCoA) and pyrophosphate. The sequence is that of Phosphopantetheine adenylyltransferase from Trichodesmium erythraeum (strain IMS101).